The following is a 168-amino-acid chain: MKRKLKMDNLNINFINDDEHPIPSQDLLLKCLQLVADKHHISHAEVNLNIVSNDEIQQINKQFRNKDKPTNIISFEFEKPQGLPDDIANDFLGDIVIAPAVLENEAKEQNKEINDHWQHIFIHGLLHLLGYDHQDDQEAEVMENLEIQLLAQLGIANPYIEQENQNGR.

Histidine 123, histidine 127, and histidine 133 together coordinate Zn(2+).

The protein belongs to the endoribonuclease YbeY family. Requires Zn(2+) as cofactor.

It is found in the cytoplasm. In terms of biological role, single strand-specific metallo-endoribonuclease involved in late-stage 70S ribosome quality control and in maturation of the 3' terminus of the 16S rRNA. The polypeptide is Endoribonuclease YbeY (Francisella tularensis subsp. holarctica (strain LVS)).